The following is a 101-amino-acid chain: Small ribosomal subunit protein uS14 (101 aa).

Belongs to the universal ribosomal protein uS14 family. Part of the 30S ribosomal subunit. Contacts proteins S3 and S10.

Binds 16S rRNA, required for the assembly of 30S particles and may also be responsible for determining the conformation of the 16S rRNA at the A site. The protein is Small ribosomal subunit protein uS14 of Chlamydia muridarum (strain MoPn / Nigg).